A 624-amino-acid chain; its full sequence is Ceramide transfer protein (624 aa).

Residues 1–11 (MSDNQSWNSSG) are compositionally biased toward polar residues. Residues 1–24 (MSDNQSWNSSGSEEDPETESGPPV) are disordered. The PH domain maps to 23-117 (PVERCGVLSK…WIDAIEQHKT (95 aa)). Serine 126 bears the Phosphoserine mark. Phosphoserine; by PKD is present on serine 132. At serine 135 the chain carries Phosphoserine. A coiled-coil region spans residues 263-303 (IELMVKREDSWQKRLDKETEKKRRTEEAYKNAMTELKKKSH). Residue serine 315 is modified to Phosphoserine. The FFAT motif lies at 321 to 327 (EFFDAVE). Tyrosine 372 is modified (phosphotyrosine). Serine 373, serine 377, and serine 380 each carry phosphoserine. In terms of domain architecture, START spans 389–618 (DVHRFSSQVE…FTSYVQEKTA (230 aa)). An N-acylsphing-4-enine contacts are provided by glutamate 472, glutamine 493, asparagine 530, and tyrosine 579.

As to quaternary structure, interacts with VAPA and VAPB. Interaction with VAPB is less efficient than with VAPA. Interacts (via FFAT motif) with the MOSPD2 (via MSP domain). Phosphorylation on Ser-132 decreases the affinity toward phosphatidylinositol 4-phosphate at Golgi membranes and reduces ceramide transfer activity. Inactivated by hyperphosphorylation of serine residues by CSNK1G2/CK1 that triggers dissociation from the Golgi complex, thus down-regulating ER-to-Golgi transport of ceramide and sphingomyelin synthesis.

The protein localises to the cytoplasm. It is found in the golgi apparatus. Its subcellular location is the endoplasmic reticulum. The enzyme catalyses N-hexadecanoylsphing-4-enine(in) = N-hexadecanoylsphing-4-enine(out). Its function is as follows. Shelters ceramides and diacylglycerol lipids inside its START domain and mediates the intracellular trafficking of ceramides and diacylglycerol lipids in a non-vesicular manner. In Pongo abelii (Sumatran orangutan), this protein is Ceramide transfer protein (CERT1).